The chain runs to 111 residues: Large ribosomal subunit protein uL22 (111 aa).

It belongs to the universal ribosomal protein uL22 family. Part of the 50S ribosomal subunit.

In terms of biological role, this protein binds specifically to 23S rRNA; its binding is stimulated by other ribosomal proteins, e.g. L4, L17, and L20. It is important during the early stages of 50S assembly. It makes multiple contacts with different domains of the 23S rRNA in the assembled 50S subunit and ribosome. Its function is as follows. The globular domain of the protein is located near the polypeptide exit tunnel on the outside of the subunit, while an extended beta-hairpin is found that lines the wall of the exit tunnel in the center of the 70S ribosome. This is Large ribosomal subunit protein uL22 from Clostridium beijerinckii (strain ATCC 51743 / NCIMB 8052) (Clostridium acetobutylicum).